The sequence spans 88 residues: Small ribosomal subunit protein bS20 (88 aa).

The disordered stretch occupies residues 1 to 28 (MANIKSQIKRNKTNEKARLRNKAVKSSL).

The protein belongs to the bacterial ribosomal protein bS20 family.

Binds directly to 16S ribosomal RNA. This is Small ribosomal subunit protein bS20 from Streptomyces avermitilis (strain ATCC 31267 / DSM 46492 / JCM 5070 / NBRC 14893 / NCIMB 12804 / NRRL 8165 / MA-4680).